The chain runs to 412 residues: Maintenance of mitochondrial morphology protein 1 (412 aa).

The Lumenal segment spans residues Met-1–Gly-19. A helical transmembrane segment spans residues Leu-20–Phe-40. The Cytoplasmic portion of the chain corresponds to Gly-41 to Thr-412. In terms of domain architecture, SMP-LTD spans Gln-121–Pro-337. Over residues Ala-372–Arg-384 the composition is skewed to basic and acidic residues. Positions Ala-372 to Thr-412 are disordered.

The protein belongs to the MMM1 family. Homodimer. Component of the ER-mitochondria encounter structure (ERMES) or MDM complex, composed of MMM1, MDM10, MDM12 and MDM34. An MMM1 homodimer associates with one molecule of MDM12 on each side in a pairwise head-to-tail manner, and the SMP-LTD domains of MMM1 and MDM12 generate a continuous hydrophobic tunnel for phospholipid trafficking.

It localises to the endoplasmic reticulum membrane. Its function is as follows. Component of the ERMES/MDM complex, which serves as a molecular tether to connect the endoplasmic reticulum (ER) and mitochondria. Components of this complex are involved in the control of mitochondrial shape and protein biogenesis, and function in nonvesicular lipid trafficking between the ER and mitochondria. The MDM12-MMM1 subcomplex functions in the major beta-barrel assembly pathway that is responsible for biogenesis of all outer membrane beta-barrel proteins, and acts in a late step after the SAM complex. The MDM10-MDM12-MMM1 subcomplex further acts in the TOM40-specific pathway after the action of the MDM12-MMM1 complex. Essential for establishing and maintaining the structure of mitochondria and maintenance of mtDNA nucleoids. This chain is Maintenance of mitochondrial morphology protein 1, found in Podospora anserina (strain S / ATCC MYA-4624 / DSM 980 / FGSC 10383) (Pleurage anserina).